Consider the following 122-residue polypeptide: Large ribosomal subunit protein bL17 (122 aa).

This sequence belongs to the bacterial ribosomal protein bL17 family. As to quaternary structure, part of the 50S ribosomal subunit. Contacts protein L32.

The sequence is that of Large ribosomal subunit protein bL17 from Neisseria gonorrhoeae (strain ATCC 700825 / FA 1090).